Here is a 359-residue protein sequence, read N- to C-terminus: 3-dehydroquinate synthase (359 aa).

Residues 106 to 110, 130 to 131, Lys143, Lys152, and 170 to 173 each bind NAD(+); these read GVVGD, TT, and TLQT. Zn(2+) is bound by residues Glu185, His248, and His265.

It belongs to the sugar phosphate cyclases superfamily. Dehydroquinate synthase family. Requires Co(2+) as cofactor. It depends on Zn(2+) as a cofactor. NAD(+) is required as a cofactor.

It is found in the cytoplasm. The catalysed reaction is 7-phospho-2-dehydro-3-deoxy-D-arabino-heptonate = 3-dehydroquinate + phosphate. The protein operates within metabolic intermediate biosynthesis; chorismate biosynthesis; chorismate from D-erythrose 4-phosphate and phosphoenolpyruvate: step 2/7. In terms of biological role, catalyzes the conversion of 3-deoxy-D-arabino-heptulosonate 7-phosphate (DAHP) to dehydroquinate (DHQ). This chain is 3-dehydroquinate synthase, found in Desulforamulus reducens (strain ATCC BAA-1160 / DSM 100696 / MI-1) (Desulfotomaculum reducens).